The chain runs to 289 residues: MLRDLFVKKKKYAAIPSEQVRKDVPDGVMTKCPKCKKIMYTKELLKNLKVCVNCGYHHPMNAWERLDSILDEGSFREYDKEMVSLNPLEFPDYEEKLESDRKKTDLNEAVVTGEGTIDDMLVVVAVMDSRFRMGSMGSVVGEKIARAVEKAYDLQVPFIIFTASGGARMQEGILSLMQMAKTSVALKKHSNAGGLFISVMTHPTTGGVSASFASLGDYNLAEPGALIGFAGRRVIEQTVREKLPEDFQTAEFLLEHGQLDAVVHRDDMRESLRKILEVHQGGEMAVWQS.

The 262-residue stretch at 28-289 (VMTKCPKCKK…QGGEMAVWQS (262 aa)) folds into the CoA carboxyltransferase N-terminal domain. The Zn(2+) site is built by cysteine 32, cysteine 35, cysteine 51, and cysteine 54. The C4-type zinc-finger motif lies at 32 to 54 (CPKCKKIMYTKELLKNLKVCVNC).

The protein belongs to the AccD/PCCB family. Acetyl-CoA carboxylase is a heterohexamer composed of biotin carboxyl carrier protein (AccB), biotin carboxylase (AccC) and two subunits each of ACCase subunit alpha (AccA) and ACCase subunit beta (AccD). It depends on Zn(2+) as a cofactor.

It is found in the cytoplasm. The catalysed reaction is N(6)-carboxybiotinyl-L-lysyl-[protein] + acetyl-CoA = N(6)-biotinyl-L-lysyl-[protein] + malonyl-CoA. The protein operates within lipid metabolism; malonyl-CoA biosynthesis; malonyl-CoA from acetyl-CoA: step 1/1. Component of the acetyl coenzyme A carboxylase (ACC) complex. Biotin carboxylase (BC) catalyzes the carboxylation of biotin on its carrier protein (BCCP) and then the CO(2) group is transferred by the transcarboxylase to acetyl-CoA to form malonyl-CoA. The sequence is that of Acetyl-coenzyme A carboxylase carboxyl transferase subunit beta from Bacillus cereus (strain AH187).